The following is a 381-amino-acid chain: Chorismate synthase (381 aa).

Residues R39 and R45 each contribute to the NADP(+) site. FMN is bound by residues 127 to 129 (RAS), 248 to 249 (QS), G293, 308 to 312 (KPIPT), and R334.

Belongs to the chorismate synthase family. Homotetramer. Requires FMNH2 as cofactor.

It carries out the reaction 5-O-(1-carboxyvinyl)-3-phosphoshikimate = chorismate + phosphate. Its pathway is metabolic intermediate biosynthesis; chorismate biosynthesis; chorismate from D-erythrose 4-phosphate and phosphoenolpyruvate: step 7/7. Functionally, catalyzes the anti-1,4-elimination of the C-3 phosphate and the C-6 proR hydrogen from 5-enolpyruvylshikimate-3-phosphate (EPSP) to yield chorismate, which is the branch point compound that serves as the starting substrate for the three terminal pathways of aromatic amino acid biosynthesis. This reaction introduces a second double bond into the aromatic ring system. The polypeptide is Chorismate synthase (Caldicellulosiruptor saccharolyticus (strain ATCC 43494 / DSM 8903 / Tp8T 6331)).